A 270-amino-acid polypeptide reads, in one-letter code: Putative phosphoenolpyruvate synthase regulatory protein (270 aa).

Position 150 to 157 (150 to 157 (GVSRCGKT)) interacts with ADP.

This sequence belongs to the pyruvate, phosphate/water dikinase regulatory protein family. PSRP subfamily.

The enzyme catalyses [pyruvate, water dikinase] + ADP = [pyruvate, water dikinase]-phosphate + AMP + H(+). It catalyses the reaction [pyruvate, water dikinase]-phosphate + phosphate + H(+) = [pyruvate, water dikinase] + diphosphate. Its function is as follows. Bifunctional serine/threonine kinase and phosphorylase involved in the regulation of the phosphoenolpyruvate synthase (PEPS) by catalyzing its phosphorylation/dephosphorylation. This is Putative phosphoenolpyruvate synthase regulatory protein from Shewanella sp. (strain ANA-3).